The primary structure comprises 224 residues: MNKREIARYIDQTNLKPYATKEDIIKLCDEAIEYGFYAVCVNPYRVKLAKDYLREKNADVKVASVIGFPLGATPTEVKVFEAKRALEDGADELDMVINIGALKDKDYEYVKNDIAEVVKVAHERGAKVKVIIETCYLTEEEKVKACELAKEAGADFVKTSTGFGTGGATVEDVRLMRKVVGPEMGVKAAGGIRTYEQALEMIEAGANRIGTSSGVKIVEGAPDE.

The active-site Proton donor/acceptor is D94. Residue K158 is the Schiff-base intermediate with acetaldehyde of the active site. Catalysis depends on K187, which acts as the Proton donor/acceptor.

Belongs to the DeoC/FbaB aldolase family. DeoC type 1 subfamily. As to quaternary structure, homodimer.

It localises to the cytoplasm. The enzyme catalyses 2-deoxy-D-ribose 5-phosphate = D-glyceraldehyde 3-phosphate + acetaldehyde. Its activity is regulated as follows. Activated by citrate. Inhibited by NaBH(4). Activity is independent of divalent metal cations. Catalyzes a reversible aldol reaction between acetaldehyde and D-glyceraldehyde 3-phosphate to generate 2-deoxy-D-ribose 5-phosphate. Could be involved in pentose biosynthesis. This is Deoxyribose-phosphate aldolase from Thermococcus kodakarensis (strain ATCC BAA-918 / JCM 12380 / KOD1) (Pyrococcus kodakaraensis (strain KOD1)).